We begin with the raw amino-acid sequence, 195 residues long: CASP-like protein Os03g0196400 (195 aa).

Residues 1–38 (MRQQQAGGVGDGVSPGNVPVCYYGPGGRVPSSLERRAR) lie on the Cytoplasmic side of the membrane. Residues 39–59 (AAEVLLRCAACGLAVLAAALL) traverse the membrane as a helical segment. The Extracellular segment spans residues 60–81 (GADRQTRVFFSIQKVARYTDMQ). A helical transmembrane segment spans residues 82–102 (SLVLLVIANGMAACYSLIQCA). At 103-104 (RC) the chain is on the cytoplasmic side. The helical transmembrane segment at 105–125 (LVMAYIVISAVAAAMEAALIG) threads the bilayer. The Extracellular segment spans residues 126 to 150 (KYGQPEFQWMKTCHLYKRFCAQAGG). A helical transmembrane segment spans residues 151 to 171 (GVACAIAASVNMVGVALISAF). At 172–195 (NLFRLYGNSNGGGKATTTTMAGGK) the chain is on the cytoplasmic side.

This sequence belongs to the Casparian strip membrane proteins (CASP) family. Homodimer and heterodimers.

Its subcellular location is the cell membrane. The polypeptide is CASP-like protein Os03g0196400 (Oryza sativa subsp. japonica (Rice)).